We begin with the raw amino-acid sequence, 401 residues long: Acetate kinase (401 aa).

A Mg(2+)-binding site is contributed by asparagine 9. Lysine 16 lines the ATP pocket. Substrate is bound at residue arginine 88. Catalysis depends on aspartate 147, which acts as the Proton donor/acceptor. ATP is bound by residues 207–211, 282–284, and 333–337; these read HLGNG, DCR, and GIGEN. Glutamate 388 provides a ligand contact to Mg(2+).

This sequence belongs to the acetokinase family. In terms of assembly, homodimer. It depends on Mg(2+) as a cofactor. Mn(2+) is required as a cofactor.

Its subcellular location is the cytoplasm. It carries out the reaction acetate + ATP = acetyl phosphate + ADP. The protein operates within metabolic intermediate biosynthesis; acetyl-CoA biosynthesis; acetyl-CoA from acetate: step 1/2. Its function is as follows. Catalyzes the formation of acetyl phosphate from acetate and ATP. Can also catalyze the reverse reaction. This is Acetate kinase from Haemophilus influenzae (strain PittEE).